Consider the following 548-residue polypeptide: T-complex protein 1 subunit alpha (548 aa).

It belongs to the TCP-1 chaperonin family. In terms of assembly, heterooligomeric complex of about 850 to 900 kDa that forms two stacked rings, 12 to 16 nm in diameter.

It is found in the cytoplasm. Molecular chaperone; assists the folding of proteins upon ATP hydrolysis. Known to play a role, in vitro, in the folding of actin and tubulin. This Dictyostelium discoideum (Social amoeba) protein is T-complex protein 1 subunit alpha (tcp1).